The following is a 360-amino-acid chain: Phospho-N-acetylmuramoyl-pentapeptide-transferase (360 aa).

Helical transmembrane passes span 25-45, 73-93, 97-117, 142-162, 167-187, 199-219, 236-256, 263-283, 288-308, and 338-358; these read RGIL…PWMI, TMGG…WADL, YVWV…VDDY, IGAA…TLIV, SVEI…IVGS, GLAI…CYLS, AGEL…FLWF, VFMG…IAVI, IVLF…MIQV, and VIVR…ATLK.

The protein belongs to the glycosyltransferase 4 family. MraY subfamily. Requires Mg(2+) as cofactor.

The protein localises to the cell inner membrane. The enzyme catalyses UDP-N-acetyl-alpha-D-muramoyl-L-alanyl-gamma-D-glutamyl-meso-2,6-diaminopimeloyl-D-alanyl-D-alanine + di-trans,octa-cis-undecaprenyl phosphate = di-trans,octa-cis-undecaprenyl diphospho-N-acetyl-alpha-D-muramoyl-L-alanyl-D-glutamyl-meso-2,6-diaminopimeloyl-D-alanyl-D-alanine + UMP. It functions in the pathway cell wall biogenesis; peptidoglycan biosynthesis. Functionally, catalyzes the initial step of the lipid cycle reactions in the biosynthesis of the cell wall peptidoglycan: transfers peptidoglycan precursor phospho-MurNAc-pentapeptide from UDP-MurNAc-pentapeptide onto the lipid carrier undecaprenyl phosphate, yielding undecaprenyl-pyrophosphoryl-MurNAc-pentapeptide, known as lipid I. The polypeptide is Phospho-N-acetylmuramoyl-pentapeptide-transferase (Pseudomonas aeruginosa (strain LESB58)).